The primary structure comprises 469 residues: Phenylalanine--tRNA ligase alpha subunit (469 aa).

L-phenylalanine contacts are provided by residues Thr-309, 348-350, and Phe-388; that span reads QLD. Position 390 (Glu-390) interacts with Mg(2+).

The protein belongs to the class-II aminoacyl-tRNA synthetase family. Phe-tRNA synthetase alpha subunit type 2 subfamily. Tetramer of two alpha and two beta subunits. Mg(2+) serves as cofactor.

Its subcellular location is the cytoplasm. The catalysed reaction is tRNA(Phe) + L-phenylalanine + ATP = L-phenylalanyl-tRNA(Phe) + AMP + diphosphate + H(+). In Sulfurisphaera tokodaii (strain DSM 16993 / JCM 10545 / NBRC 100140 / 7) (Sulfolobus tokodaii), this protein is Phenylalanine--tRNA ligase alpha subunit.